Reading from the N-terminus, the 290-residue chain is MEWSLTQSKLLAFHRLMRTDKPIGALLLLWPTLWALWVATPGMPQLWILAVFVAGVWLMRAAGCVVNDYADRKFDGHVKRTVNRPLPSGAVTEKEARNLFVVLVLLAFLLVLTLNAMTILLSVAALALAWVYPFMKRYTHLPQVVLGAAFGWSIPMAFAAVSESLPLSCWLMFLANILWAVAYDTQYAMVDRDDDIKIGIKSTAILFGRYDTLIIGILQLGVMALMALIGWLNGLGWGYYWAVLVAGALFVYQQKLIANREREACFKAFMNNNYVGLVLFLGLAMSYWHF.

The next 8 membrane-spanning stretches (helical) occupy residues 23-43, 46-66, 99-119, 141-161, 163-183, 212-232, 233-253, and 268-288; these read IGALLLLWPTLWALWVATPGM, LWILAVFVAGVWLMRAAGCVV, LFVVLVLLAFLLVLTLNAMTI, LPQVVLGAAFGWSIPMAFAAV, ESLPLSCWLMFLANILWAVAY, TLIIGILQLGVMALMALIGWL, NGLGWGYYWAVLVAGALFVYQ, and AFMNNNYVGLVLFLGLAMSYW.

Belongs to the UbiA prenyltransferase family. The cofactor is Mg(2+).

The protein resides in the cell inner membrane. The catalysed reaction is all-trans-octaprenyl diphosphate + 4-hydroxybenzoate = 4-hydroxy-3-(all-trans-octaprenyl)benzoate + diphosphate. The protein operates within cofactor biosynthesis; ubiquinone biosynthesis. Catalyzes the prenylation of para-hydroxybenzoate (PHB) with an all-trans polyprenyl group. Mediates the second step in the final reaction sequence of ubiquinone-8 (UQ-8) biosynthesis, which is the condensation of the polyisoprenoid side chain with PHB, generating the first membrane-bound Q intermediate 3-octaprenyl-4-hydroxybenzoate. The polypeptide is 4-hydroxybenzoate octaprenyltransferase (Salmonella typhi).